We begin with the raw amino-acid sequence, 470 residues long: Probable citrate synthase, mitochondrial (470 aa).

Catalysis depends on residues His-297, His-351, and Asp-406.

The protein belongs to the citrate synthase family. In terms of assembly, homodimer.

Its subcellular location is the mitochondrion matrix. The catalysed reaction is oxaloacetate + acetyl-CoA + H2O = citrate + CoA + H(+). It participates in carbohydrate metabolism; tricarboxylic acid cycle; isocitrate from oxaloacetate: step 1/2. This chain is Probable citrate synthase, mitochondrial, found in Leishmania infantum.